The sequence spans 190 residues: GTP cyclohydrolase 1 1 (190 aa).

This sequence belongs to the GTP cyclohydrolase I family. As to quaternary structure, homomer.

It catalyses the reaction GTP + H2O = 7,8-dihydroneopterin 3'-triphosphate + formate + H(+). It participates in cofactor biosynthesis; 7,8-dihydroneopterin triphosphate biosynthesis; 7,8-dihydroneopterin triphosphate from GTP: step 1/1. In Pseudomonas putida (strain ATCC 47054 / DSM 6125 / CFBP 8728 / NCIMB 11950 / KT2440), this protein is GTP cyclohydrolase 1 1.